Reading from the N-terminus, the 369-residue chain is Methionine import ATP-binding protein MetN 2 (369 aa).

Positions Val33–Leu270 constitute an ABC transporter domain. Position 67–74 (Gly67–Ser74) interacts with ATP.

The protein belongs to the ABC transporter superfamily. Methionine importer (TC 3.A.1.24) family. As to quaternary structure, the complex is composed of two ATP-binding proteins (MetN), two transmembrane proteins (MetI) and a solute-binding protein (MetQ).

The protein resides in the cell inner membrane. The catalysed reaction is L-methionine(out) + ATP + H2O = L-methionine(in) + ADP + phosphate + H(+). The enzyme catalyses D-methionine(out) + ATP + H2O = D-methionine(in) + ADP + phosphate + H(+). Functionally, part of the ABC transporter complex MetNIQ involved in methionine import. Responsible for energy coupling to the transport system. This is Methionine import ATP-binding protein MetN 2 from Pseudomonas putida (strain ATCC 47054 / DSM 6125 / CFBP 8728 / NCIMB 11950 / KT2440).